Reading from the N-terminus, the 426-residue chain is MLDLKMIRNHVEDVKAKLATRGVKPEAIDDLLAKDNERRELIVKSENLKKLRNEVSDQISQLKRNKEDANDKIQEMRKVSQDIKGLDEQLENIAEEVESKAAHLPNLPHEDVPVSLTEEGSVEQRRNGTPRTFDFTPKAHWEIGEELGILDFERAAKVAGSRFVYYVGDGARLERAVYNFFLDQNNAAGFTEEITPYMVNDASMFGTGQFPKFKETHAGYEVKDEGLTLIPTAEVPLVNYYRDEIIDEEKLPISVTALSPAFRSEAGSAGRDTRGLIRMHQFNKVEMVKIAKPEQSWNELEKLTTHAETLLQKLGLPYRVITLTTGDMSFTAAKTYDLEVWIPAQDKYREISSCSNCTDFQARRAHIRFRDENGKLQYVHTLNGSGLAVGRTVAAILENYQNEDGTVNVPEALVPYMQGTTVIGKK.

Residue 232 to 234 participates in L-serine binding; sequence TAE. 263–265 is an ATP binding site; sequence RSE. L-serine is bound at residue glutamate 286. 350-353 contributes to the ATP binding site; that stretch reads EISS. Serine 385 serves as a coordination point for L-serine.

Belongs to the class-II aminoacyl-tRNA synthetase family. Type-1 seryl-tRNA synthetase subfamily. In terms of assembly, homodimer. The tRNA molecule binds across the dimer.

Its subcellular location is the cytoplasm. It catalyses the reaction tRNA(Ser) + L-serine + ATP = L-seryl-tRNA(Ser) + AMP + diphosphate + H(+). The catalysed reaction is tRNA(Sec) + L-serine + ATP = L-seryl-tRNA(Sec) + AMP + diphosphate + H(+). It functions in the pathway aminoacyl-tRNA biosynthesis; selenocysteinyl-tRNA(Sec) biosynthesis; L-seryl-tRNA(Sec) from L-serine and tRNA(Sec): step 1/1. Catalyzes the attachment of serine to tRNA(Ser). Is also able to aminoacylate tRNA(Sec) with serine, to form the misacylated tRNA L-seryl-tRNA(Sec), which will be further converted into selenocysteinyl-tRNA(Sec). The polypeptide is Serine--tRNA ligase (Pediococcus pentosaceus (strain ATCC 25745 / CCUG 21536 / LMG 10740 / 183-1w)).